The primary structure comprises 128 residues: Large-conductance mechanosensitive channel (128 aa).

Helical transmembrane passes span 11–31 and 70–90; these read FALK…AAFG and GAFI…FIFV.

The protein belongs to the MscL family. As to quaternary structure, homopentamer.

The protein resides in the cell membrane. Functionally, channel that opens in response to stretch forces in the membrane lipid bilayer. May participate in the regulation of osmotic pressure changes within the cell. This is Large-conductance mechanosensitive channel from Listeria innocua serovar 6a (strain ATCC BAA-680 / CLIP 11262).